The following is a 720-amino-acid chain: DNA replication licensing factor mcm7-A (720 aa).

Residues 183-210 (CDQCGAETYQPIQSPTFMPLIMCPSREC) form a C4-type zinc finger. An MCM domain is found at 331 to 537 (FYEKLAASIA…NDLRLAQHIT (207 aa)). Positions 344, 383, 385, 386, 387, 488, 513, and 603 each coordinate ATP. The Arginine finger motif lies at 512–515 (SRFD).

This sequence belongs to the MCM family. In terms of assembly, component of the mcm2-7 complex (RLF-M). The complex forms a toroidal hexameric ring with the proposed subunit order mcm2-mcm6-mcm4-mcm7-mcm3-mcm5. The heterodimer of mmcm3/mcm5 interacts with mcm4, mmcm6, mcm7 and weakly with mcm2. The N-terminus is required for interaction with mmcm3, though this interaction may not be direct, and remains in a complex with mmcm3 throughout the cell cycle. Begins to associate with zmcm6 at the neurula stage. Component of the replisome complex. Component of the CMG helicase complex, composed of the mcm2-7 complex, the GINS complex and cdc45. In terms of processing, ubiquitinated by traip when forks converge following formation of DNA interstrand cross-links. Ubiquitinated via 'Lys-6'- and 'Lys-63'-linked polyubiquitination by traip. Short ubiquitin chains on mcm7 promote recruitment of DNA glycosylase neil3. If the interstrand cross-link cannot be cleaved by neil3, the ubiquitin chains continue to grow on mcm7, promoting the unloading of the CMG helicase complex by the vcp/p97 ATPase.

It is found in the nucleus. Its subcellular location is the chromosome. The catalysed reaction is ATP + H2O = ADP + phosphate + H(+). Its function is as follows. Acts as a component of the mcm2-7 complex (mcm complex) which is the putative replicative helicase essential for 'once per cell cycle' DNA replication initiation and elongation in eukaryotic cells. The active ATPase sites in the mcm2-7 ring are formed through the interaction surfaces of two neighboring subunits such that a critical structure of a conserved arginine finger motif is provided in trans relative to the ATP-binding site of the Walker A box of the adjacent subunit. The six ATPase active sites, however, are likely to contribute differentially to the complex helicase activity. The existence of maternal and zygotic forms of mcm3 and mcm6 suggests that specific forms of mcm2-7 complexes may be used during different stages of development. This is DNA replication licensing factor mcm7-A (mcm7-a) from Xenopus laevis (African clawed frog).